The following is a 767-amino-acid chain: Photosystem I P700 chlorophyll a apoprotein A1 (767 aa).

The segment at 1–22 (MTISPPESGEKNKKVLEDPVKA) is disordered. The span at 8–22 (SGEKNKKVLEDPVKA) shows a compositional bias: basic and acidic residues. The next 8 helical transmembrane spans lie at 76 to 99 (IFSA…FHGA), 162 to 185 (LMAL…YHYH), 201 to 225 (LNHH…HIGA), 309 to 327 (IAHH…GHLY), 368 to 391 (RHAQ…HHMY), 407 to 433 (LGLF…IAMV), 455 to 477 (ALIS…LYIH), and 558 to 576 (LMIH…LILL). [4Fe-4S] cluster is bound by residues Cys-600 and Cys-609. 2 helical membrane passes run 616-637 (HVFL…HFSW) and 681-703 (ISMY…MFLF). His-692 contacts divinylchlorophyll a'. Residues Met-700 and Tyr-708 each coordinate divinyl chlorophyll a. Trp-709 is a phylloquinone binding site. Residues 741–761 (AVGVAHFLLGGIATTWAFFHA) form a helical membrane-spanning segment.

This sequence belongs to the PsaA/PsaB family. In terms of assembly, the PsaA/B heterodimer binds the P700 divinyl chlorophyll special pair and subsequent electron acceptors. PSI consists of a core antenna complex that captures photons, and an electron transfer chain that converts photonic excitation into a charge separation. The cyanobacterial PSI reaction center is composed of one copy each of PsaA,B,C,D,E,F,I,J,K,L,M and X, and forms trimeric complexes. It depends on PSI electron transfer chain: 5 divinyl chlorophyll a, 1 divinyl chlorophyll a', 2 phylloquinones and 3 4Fe-4S clusters. PSI core antenna: 90 divinyl chlorophyll a, 22 carotenoids, 3 phospholipids and 1 galactolipid. P700 is a divinyl chlorophyll a/divinyl chlorophyll a' dimer, A0 is one or more divinyl chlorophyll a, A1 is one or both phylloquinones and FX is a shared 4Fe-4S iron-sulfur center. as a cofactor.

The protein localises to the cellular thylakoid membrane. It carries out the reaction reduced [plastocyanin] + hnu + oxidized [2Fe-2S]-[ferredoxin] = oxidized [plastocyanin] + reduced [2Fe-2S]-[ferredoxin]. Its function is as follows. PsaA and PsaB bind P700, the primary electron donor of photosystem I (PSI), as well as the electron acceptors A0, A1 and FX. PSI is a plastocyanin/cytochrome c6-ferredoxin oxidoreductase, converting photonic excitation into a charge separation, which transfers an electron from the donor P700 chlorophyll pair to the spectroscopically characterized acceptors A0, A1, FX, FA and FB in turn. Oxidized P700 is reduced on the lumenal side of the thylakoid membrane by plastocyanin or cytochrome c6. The protein is Photosystem I P700 chlorophyll a apoprotein A1 of Prochlorococcus marinus (strain MIT 9312).